Reading from the N-terminus, the 339-residue chain is Pyrimidine monooxygenase RutA (339 aa).

FMN contacts are provided by residues 26 to 27 (IK), Asn-92, Glu-101, 117 to 118 (RY), and Ser-167.

This sequence belongs to the NtaA/SnaA/DszA monooxygenase family. RutA subfamily.

The catalysed reaction is uracil + FMNH2 + NADH + O2 = (Z)-3-ureidoacrylate + FMN + NAD(+) + H2O + H(+). It carries out the reaction thymine + FMNH2 + NADH + O2 = (Z)-2-methylureidoacrylate + FMN + NAD(+) + H2O + H(+). In terms of biological role, catalyzes the pyrimidine ring opening between N-3 and C-4 by an unusual flavin hydroperoxide-catalyzed mechanism, adding oxygen atoms in the process to yield ureidoacrylate peracid, that immediately reacts with FMN forming ureidoacrylate and FMN-N(5)-oxide. The FMN-N(5)-oxide reacts spontaneously with NADH to produce FMN. Requires the flavin reductase RutF to regenerate FMN in vivo. The chain is Pyrimidine monooxygenase RutA from Cronobacter sakazakii (strain ATCC BAA-894) (Enterobacter sakazakii).